A 354-amino-acid polypeptide reads, in one-letter code: Adenine deaminase (354 aa).

Zn(2+)-binding residues include H19, H21, and H211. The active-site Proton donor is the E214. Residue D291 coordinates Zn(2+). D292 contacts substrate.

Belongs to the metallo-dependent hydrolases superfamily. Adenosine and AMP deaminases family. Adenine deaminase type 2 subfamily. The cofactor is Zn(2+).

It is found in the cytoplasm. The protein localises to the nucleus. It catalyses the reaction adenine + H2O + H(+) = hypoxanthine + NH4(+). Catalyzes the hydrolytic deamination of adenine to hypoxanthine. Plays an important role in the purine salvage pathway and in nitrogen catabolism. The polypeptide is Adenine deaminase (aah1) (Aspergillus fumigatus (strain ATCC MYA-4609 / CBS 101355 / FGSC A1100 / Af293) (Neosartorya fumigata)).